The sequence spans 286 residues: PTS system mannose-specific EIID component (286 aa).

Met1 bears the N-formylmethionine mark. At Met1–Thr17 the chain is on the cytoplasmic side. The 271-residue stretch at Lys14–Leu284 folds into the PTS EIID domain. An intramembrane segment occupies Gln18 to Arg55. Topologically, residues Leu56–Glu62 are cytoplasmic. An intramembrane segment occupies Ala63–Gln95. Residues Arg96–Asp103 lie on the Cytoplasmic side of the membrane. Positions Asp104–Met143 form a transmembrane segment. At Ser144 to Leu147 the chain is on the periplasmic side. The chain crosses the lipid bilayer at residues Leu148 to Gly176. At Ile177–Gly186 the chain is on the cytoplasmic side. Positions Phe187 to His212 form a transmembrane segment. Topologically, residues Val213–Gly244 are periplasmic. The segment at Leu245 to Leu258 is a transmembrane helix. Residues Arg259–Pro264 are Cytoplasmic-facing. A transmembrane helix spans residues Leu265–Leu283. At Leu284–Leu286 the chain is on the periplasmic side.

In terms of assembly, homotrimer of protomers that are composed of two subunits, IIC and IID.

The protein localises to the cell inner membrane. The phosphoenolpyruvate-dependent sugar phosphotransferase system (sugar PTS), a major carbohydrate active transport system, catalyzes the phosphorylation of incoming sugar substrates concomitantly with their translocation across the cell membrane. The enzyme II ManXYZ PTS system is involved in mannose transport. The polypeptide is PTS system mannose-specific EIID component (manZ) (Escherichia coli O6:H1 (strain CFT073 / ATCC 700928 / UPEC)).